The following is a 642-amino-acid chain: Protein INCREASED PETAL GROWTH ANISOTROPY 1 (642 aa).

Residues 1–60 are disordered; it reads MVAGKVRVTMGFHKSPSTKKTKDMPSPLPLPPPPPPPLKPPSSGSATTKPPINPSKPGFT. Over residues 26–40 the composition is skewed to pro residues; that stretch reads SPLPLPPPPPPPLKP. The stretch at 80 to 183 forms a coiled coil; the sequence is AASHNGVVSE…EAEIVELRKL (104 aa). Residues 223-351 are disordered; sequence NLPEPITNQE…PPKSLSIASA (129 aa). Residues 247–256 are compositionally biased toward basic and acidic residues; that stretch reads DIYRKDEIES. The span at 258 to 277 shows a compositional bias: low complexity; the sequence is SRSSNSEELTESSSLSTVRS. Residues 302–344 show a composition bias toward pro residues; sequence DPPPQKSIPPPPPPPPPPLLQQPPPPPSVSKAPPPPPPPPPPK.

This sequence belongs to the IPGA1 family. As to quaternary structure, associates to cortical microtubules via its N-terminal region. Interacts with ANGUSTIFOLIA (AN) on microtubule upon mechanical stress to regulate microtubule organization. Binds to the microtubule-severing enzyme KATANIN (KTN1). Expressed ubiquitously at all development stages, with highest in developing petals. During mechanical stress, accumulates in granules on microtubules.

Its subcellular location is the cytoplasm. It localises to the cytoskeleton. It is found in the cytosol. The protein localises to the cell membrane. Functionally, microtubule-associated protein involved in the regulation of anisotropic petal and cotyledons growth and shape by affecting cortical microtubule organization. Prevents cortical microtubules organization into parallel arrays oriented perpendicular to the axis of cell elongation thus limiting anisotropic cell growth in the late phases of petal development. Cooperatively with ANGUSTIFOLIA (AN), negatively regulates cortical microtubules (CMTs) organization in response to mechanical stress and modulates pavement cells morphogenesis leading to puzzle shape, probably in an AAA1/KTN1-dependent manner. This chain is Protein INCREASED PETAL GROWTH ANISOTROPY 1, found in Arabidopsis thaliana (Mouse-ear cress).